A 364-amino-acid chain; its full sequence is Peptidoglycan transport system permease protein YejB (364 aa).

A run of 6 helical transmembrane segments spans residues 9–29 (LALM…VIQF), 134–154 (SASL…PLGI), 171–191 (IIII…IVLF), 219–239 (IIDY…SAFA), 283–303 (IVIA…SLLI), and 325–345 (YPIV…VGLL). The region spanning 131–350 (LPVSASLGFW…VVGLLSDLIY (220 aa)) is the ABC transmembrane type-1 domain.

This sequence belongs to the binding-protein-dependent transport system permease family. The complex is composed of one ATP-binding protein (YejF), two transmembrane proteins (YejB and YejE) and a solute-binding protein (YepA or YejA).

Its subcellular location is the cell inner membrane. Functionally, part of the ABC transporter complex YejBEF-YepA involved in the uptake of muropeptides, the breakdown products of cell wall peptidoglycan. The import of muropeptides into the cell enables peptidoglycan recycling, which is vital for cell wall integrity in this bacterium. Is also probably part of the ABC transporter complex YejABEF, which is likely involved in broad-spectrum peptide import. Responsible for the translocation of the substrate across the membrane. The polypeptide is Peptidoglycan transport system permease protein YejB (Agrobacterium fabrum (strain C58 / ATCC 33970) (Agrobacterium tumefaciens (strain C58))).